The sequence spans 116 residues: Dynein light chain Tctex-type 3 (116 aa).

Tyr-4 is modified (3'-nitrotyrosine).

The protein belongs to the dynein light chain Tctex-type family. In terms of assembly, homodimer. The cytoplasmic dynein 1 complex consists of two catalytic heavy chains (HCs) and a number of non-catalytic subunits presented by intermediate chains (ICs), light intermediate chains (LICs) and light chains (LCs); the composition seems to vary in respect to the IC, LIC and LC composition. The heavy chain homodimer serves as a scaffold for the probable homodimeric assembly of the respective non-catalytic subunits. The ICs and LICs bind directly to the HC dimer and the LCs assemble on the IC dimer. DYNLT1 and DYNLT3 compete for association with dynein IC (DYNC1I1 or DYNC1I2). Self-associates. Interacts with DYNC1I1 and DYNC1I2. Interacts with BUB3. Interacts with SATB1 in nucleus to form complex with matrix attachment regions (MARs) of DNA.

The protein localises to the nucleus. The protein resides in the cytoplasm. It is found in the cytoskeleton. Its subcellular location is the chromosome. It localises to the centromere. The protein localises to the kinetochore. Functionally, acts as one of several non-catalytic accessory components of the cytoplasmic dynein 1 complex that are thought to be involved in linking dynein to cargos and to adapter proteins that regulate dynein function. Cytoplasmic dynein 1 acts as a motor for the intracellular retrograde motility of vesicles and organelles along microtubules. Probably binds BUB3 as part of transport cargo. Required for the efficient progression through mitosis. The polypeptide is Dynein light chain Tctex-type 3 (DYNLT3) (Canis lupus familiaris (Dog)).